A 366-amino-acid polypeptide reads, in one-letter code: Histidinol-phosphate aminotransferase 2 (366 aa).

Residue Lys-226 is modified to N6-(pyridoxal phosphate)lysine.

It belongs to the class-II pyridoxal-phosphate-dependent aminotransferase family. Histidinol-phosphate aminotransferase subfamily. As to quaternary structure, homodimer. The cofactor is pyridoxal 5'-phosphate.

The catalysed reaction is L-histidinol phosphate + 2-oxoglutarate = 3-(imidazol-4-yl)-2-oxopropyl phosphate + L-glutamate. The protein operates within amino-acid biosynthesis; L-histidine biosynthesis; L-histidine from 5-phospho-alpha-D-ribose 1-diphosphate: step 7/9. The sequence is that of Histidinol-phosphate aminotransferase 2 from Haemophilus influenzae (strain 86-028NP).